Consider the following 131-residue polypeptide: Classical arabinogalactan protein 2 (131 aa).

A signal peptide spans 1–21 (MNSKAMQALIFLGFLATSCLA). Q22 is modified (pyrrolidone carboxylic acid). 4-hydroxyproline occurs at positions 24, 26, 28, 34, and 35. O-linked (Ara...) hydroxyproline glycosylation is found at P24, P26, P28, P34, and P35. The disordered stretch occupies residues 24–106 (PAPAPTTVTP…PGPDGAADAP (83 aa)). 2 stretches are compositionally biased toward pro residues: residues 25-38 (APAPTTVTPPPTAL) and 49-64 (IASPPVPVNEPTPAPT). Low complexity-rich tracts occupy residues 65-76 (TSPTTSPVASPP) and 90-106 (TPTSSPAPGPDGAADAP). A lipid anchor (GPI-anchor amidated serine) is attached at S107. A propeptide spans 108–131 (AAWANKAFLVGTAVAGALYAVVLA) (removed in mature form).

Belongs to the classical AGP family. Post-translationally, O-glycosylated on hydroxyprolines; noncontiguous hydroxylproline residues are glycosylated with arabinogalactan.

The protein resides in the cell membrane. Proteoglycan that seems to be implicated in diverse developmental roles such as differentiation, cell-cell recognition, embryogenesis and programmed cell death. This is Classical arabinogalactan protein 2 (AGP2) from Arabidopsis thaliana (Mouse-ear cress).